We begin with the raw amino-acid sequence, 214 residues long: Thiamine-phosphate synthase (214 aa).

4-amino-2-methyl-5-(diphosphooxymethyl)pyrimidine contacts are provided by residues 40-44 (QLREK) and Asn-72. 2 residues coordinate Mg(2+): Asp-73 and Asp-92. Ser-110 lines the 4-amino-2-methyl-5-(diphosphooxymethyl)pyrimidine pocket. 137-139 (SPT) contributes to the 2-[(2R,5Z)-2-carboxy-4-methylthiazol-5(2H)-ylidene]ethyl phosphate binding site. Lys-140 is a 4-amino-2-methyl-5-(diphosphooxymethyl)pyrimidine binding site. Residues Gly-167 and 185–186 (IS) contribute to the 2-[(2R,5Z)-2-carboxy-4-methylthiazol-5(2H)-ylidene]ethyl phosphate site.

Belongs to the thiamine-phosphate synthase family. The cofactor is Mg(2+).

It catalyses the reaction 2-[(2R,5Z)-2-carboxy-4-methylthiazol-5(2H)-ylidene]ethyl phosphate + 4-amino-2-methyl-5-(diphosphooxymethyl)pyrimidine + 2 H(+) = thiamine phosphate + CO2 + diphosphate. The enzyme catalyses 2-(2-carboxy-4-methylthiazol-5-yl)ethyl phosphate + 4-amino-2-methyl-5-(diphosphooxymethyl)pyrimidine + 2 H(+) = thiamine phosphate + CO2 + diphosphate. It carries out the reaction 4-methyl-5-(2-phosphooxyethyl)-thiazole + 4-amino-2-methyl-5-(diphosphooxymethyl)pyrimidine + H(+) = thiamine phosphate + diphosphate. The protein operates within cofactor biosynthesis; thiamine diphosphate biosynthesis; thiamine phosphate from 4-amino-2-methyl-5-diphosphomethylpyrimidine and 4-methyl-5-(2-phosphoethyl)-thiazole: step 1/1. Functionally, condenses 4-methyl-5-(beta-hydroxyethyl)thiazole monophosphate (THZ-P) and 2-methyl-4-amino-5-hydroxymethyl pyrimidine pyrophosphate (HMP-PP) to form thiamine monophosphate (TMP). The protein is Thiamine-phosphate synthase of Wolinella succinogenes (strain ATCC 29543 / DSM 1740 / CCUG 13145 / JCM 31913 / LMG 7466 / NCTC 11488 / FDC 602W) (Vibrio succinogenes).